Reading from the N-terminus, the 132-residue chain is Telomere bouquet protein 1 (132 aa).

Interacts with bqt2 and sad1. The bqt1-bqt2-sad1 complex binds rap1.

It localises to the cytoplasm. The protein localises to the cytoskeleton. It is found in the microtubule organizing center. Its subcellular location is the spindle pole body. The protein resides in the chromosome. It localises to the telomere. Functionally, involved in chromosome segregation. During meiotic prophase, connects telomeres to the spindle pole body by forming a bridge between the telomere protein rap1 and the spindle pole body protein sad1. The chain is Telomere bouquet protein 1 (bqt1) from Schizosaccharomyces pombe (strain 972 / ATCC 24843) (Fission yeast).